The sequence spans 88 residues: Small ribosomal subunit protein bS20 (88 aa).

The disordered stretch occupies residues 1–27 (MANSKSAKKRALQSEKRRQHNASRRSM).

It belongs to the bacterial ribosomal protein bS20 family.

Binds directly to 16S ribosomal RNA. The polypeptide is Small ribosomal subunit protein bS20 (Shewanella denitrificans (strain OS217 / ATCC BAA-1090 / DSM 15013)).